The following is a 291-amino-acid chain: Phytanoyl-CoA dioxygenase domain-containing protein 1 (291 aa).

Residues K102, M141, 156–158, and W174 contribute to the 2-oxoglutarate site; that span reads HQD. Fe cation-binding residues include H156 and D158. Fe cation is bound at residue H246. Residues S248 and R257 each contribute to the 2-oxoglutarate site.

This sequence belongs to the PhyH family. PHYHD1 subfamily. It depends on Fe cation as a cofactor.

2-oxoglutarate(2OG)-dependent dioxygenase that catalyzes the conversion of 2-oxoglutarate to succinate and CO(2) in an iron-dependent manner. However, does not couple 2OG turnover to the hydroxylation of acyl-coenzyme A derivatives, implying that it is not directly involved in phytanoyl coenzyme-A metabolism. Does not show detectable activity towards fatty acid CoA thioesters. This chain is Phytanoyl-CoA dioxygenase domain-containing protein 1 (phyhd1), found in Danio rerio (Zebrafish).